The sequence spans 401 residues: Lipoyl synthase 1, mitochondrial (401 aa).

The N-terminal 25 residues, Met-1 to Thr-25, are a transit peptide targeting the mitochondrion. Residues Ile-49 to Pro-79 form a disordered region. Over residues Asp-51 to Ser-70 the composition is skewed to polar residues. Residues Cys-117, Cys-122, Cys-128, Cys-148, Cys-152, Cys-155, and Ser-376 each contribute to the [4Fe-4S] cluster site. The region spanning Glu-133–Ala-365 is the Radical SAM core domain.

This sequence belongs to the radical SAM superfamily. Lipoyl synthase family. [4Fe-4S] cluster is required as a cofactor.

It localises to the mitochondrion. It catalyses the reaction [[Fe-S] cluster scaffold protein carrying a second [4Fe-4S](2+) cluster] + N(6)-octanoyl-L-lysyl-[protein] + 2 oxidized [2Fe-2S]-[ferredoxin] + 2 S-adenosyl-L-methionine + 4 H(+) = [[Fe-S] cluster scaffold protein] + N(6)-[(R)-dihydrolipoyl]-L-lysyl-[protein] + 4 Fe(3+) + 2 hydrogen sulfide + 2 5'-deoxyadenosine + 2 L-methionine + 2 reduced [2Fe-2S]-[ferredoxin]. It functions in the pathway protein modification; protein lipoylation via endogenous pathway; protein N(6)-(lipoyl)lysine from octanoyl-[acyl-carrier-protein]: step 2/2. Functionally, catalyzes the radical-mediated insertion of two sulfur atoms into the C-6 and C-8 positions of the octanoyl moiety bound to the lipoyl domains of lipoate-dependent enzymes, thereby converting the octanoylated domains into lipoylated derivatives. In Phaeodactylum tricornutum (strain CCAP 1055/1), this protein is Lipoyl synthase 1, mitochondrial.